Here is a 577-residue protein sequence, read N- to C-terminus: Cell pattern formation-associated protein stuA (577 aa).

Residues 1–41 (MNQPQPYMDQHAPAPPPASNMTQYSNYGAPQPLQPATHGYG) are disordered. Polar residues predominate over residues 19 to 28 (SNMTQYSNYG). In terms of domain architecture, HTH APSES-type spans 111 to 217 (RVTATLWEDE…HNIGALLYHP (107 aa)). The H-T-H motif DNA-binding region spans 145 to 166 (GTKLLNVAGMTRGRRDGILKSE). 2 disordered regions span residues 228–487 (ATMA…QLPS) and 518–577 (QYPA…AVRR). Composition is skewed to polar residues over residues 238–251 (SQEY…TQAP) and 319–333 (AVNS…SQGM). Low complexity predominate over residues 334–350 (PQYQTSQPPYTQSYSTP). Residues 351 to 364 (GSYSQPQYTHQQPG) are compositionally biased toward polar residues. The span at 390–399 (AENDHPDHKV) shows a compositional bias: basic and acidic residues. Low complexity predominate over residues 465-479 (TPRTTNPYTGYNNTP). The interval 526–552 (KRGREDDDQVDPYGRPSSALGEHKRQR) is nuclear localization domain.

The protein belongs to the EFG1/PHD1/stuA family.

It is found in the nucleus. Its function is as follows. Transcription factor that regulates asexual reproduction. Binds the StuA-response elements (StRE) with the consensus sequence 5'-(A/T)CGCG(T/A)N(A/C)-3' at the promoters of target genes. This chain is Cell pattern formation-associated protein stuA, found in Dothistroma septosporum (strain NZE10 / CBS 128990) (Red band needle blight fungus).